A 655-amino-acid polypeptide reads, in one-letter code: tRNA uridine 5-carboxymethylaminomethyl modification enzyme MnmG (655 aa).

13 to 18 (GGGHAG) contributes to the FAD binding site. 281–295 (GPRYCPSVEDKINRF) provides a ligand contact to NAD(+).

Belongs to the MnmG family. In terms of assembly, homodimer. Heterotetramer of two MnmE and two MnmG subunits. Requires FAD as cofactor.

It is found in the cytoplasm. In terms of biological role, NAD-binding protein involved in the addition of a carboxymethylaminomethyl (cmnm) group at the wobble position (U34) of certain tRNAs, forming tRNA-cmnm(5)s(2)U34. In Paracidovorax citrulli (strain AAC00-1) (Acidovorax citrulli), this protein is tRNA uridine 5-carboxymethylaminomethyl modification enzyme MnmG.